An 899-amino-acid polypeptide reads, in one-letter code: Toll-like receptor 4 (899 aa).

The signal sequence occupies residues 1-46 (MCPLQIHVLHLIQGNQKNRKGKYVNMTRQLWYILPLLFLLCHCVTS). 4 N-linked (GlcNAc...) asparagine glycosylation sites follow: asparagine 25, asparagine 75, asparagine 83, and asparagine 93. Residues 47-702 (ERRCYFSKIS…LERNCRSYTA (656 aa)) are Extracellular-facing. LRR repeat units follow at residues 83-103 (NESV…PDLP), 104-126 (RSLL…AFAR), 128-150 (QNLT…LTAG), 155-179 (LTRL…VLSD), 181-202 (VSLN…MRKI), 203-229 (HALK…YFQN), and 230-253 (VHGI…TFSY). N-linked (GlcNAc...) asparagine glycosylation is found at asparagine 129, asparagine 137, asparagine 146, and asparagine 168. Asparagine 237, asparagine 256, asparagine 275, and asparagine 313 each carry an N-linked (GlcNAc...) asparagine glycan. LRR repeat units lie at residues 257 to 282 (LTHL…DLKN), 313 to 336 (NTSL…VLMY), 338 to 360 (PKTL…ALET), and 363 to 386 (LVNL…IFSN). N-linked (GlcNAc...) asparagine glycans are attached at residues asparagine 388, asparagine 432, and asparagine 463. 7 LRR repeats span residues 468 to 493 (HYPL…VFYD), 501 to 524 (LEGL…FFDY), 526 to 549 (TGLK…EKGE), 554 to 577 (LLKL…ILRN), 579 to 601 (ISLE…LKHI), 602 to 624 (KGLR…VMRE), and 631 to 654 (SSNL…HFLR). The N-linked (GlcNAc...) asparagine glycan is linked to asparagine 516. 3 N-linked (GlcNAc...) asparagine glycosylation sites follow: asparagine 633, asparagine 637, and asparagine 668. Residues 703 to 723 (VIVLFSCVFVILLTVIVCGVV) traverse the membrane as a helical segment. The Cytoplasmic portion of the chain corresponds to 724–899 (YRYRWKLRYL…WRKLRDPISM (176 aa)). The region spanning 756 to 897 (YEFDAFISYA…IFWRKLRDPI (142 aa)) is the TIR domain.

This sequence belongs to the Toll-like receptor family. As to expression, expressed in all tissues tested. The highest expression is in the hepatopancreas, with moderate expression in the gills, and low expression in the gonads, adductor muscle, hemocytes, and mantle.

The protein localises to the cell membrane. Its function is as follows. May be involved in the innate immune response. This Pinctada imbricata (Atlantic pearl-oyster) protein is Toll-like receptor 4.